The following is a 436-amino-acid chain: GTPase Der (436 aa).

EngA-type G domains follow at residues 4–167 and 175–351; these read PTVA…PNEI and IKFS…HAQN. GTP contacts are provided by residues 10–17, 57–61, 119–122, 181–188, 229–233, and 294–297; these read GRPNVGKS, DTGGI, NKVD, DTAGM, and NKWD. One can recognise a KH-like domain in the interval 352–436; it reads LRISSSVLND…PIHLIARKRK (85 aa).

It belongs to the TRAFAC class TrmE-Era-EngA-EngB-Septin-like GTPase superfamily. EngA (Der) GTPase family. As to quaternary structure, associates with the 50S ribosomal subunit.

Its function is as follows. GTPase that plays an essential role in the late steps of ribosome biogenesis. The chain is GTPase Der from Lactococcus lactis subsp. cremoris (strain SK11).